The sequence spans 591 residues: Parathyroid hormone/parathyroid hormone-related peptide receptor (591 aa).

An N-terminal signal peptide occupies residues 1–26 (MGAARIAPSLALLLCCPVLSSAYALV). Over 27-188 (DADDVFTKEE…REREVFDRLG (162 aa)) the chain is Extracellular. 3 disulfides stabilise this stretch: C48–C117, C108–C148, and C131–C170. The segment at 67–104 (KGWTPASTSGKPRKEKASGKFYPESKENKDVPTGSRRR) is disordered. The segment covering 81-96 (EKASGKFYPESKENKD) has biased composition (basic and acidic residues). 4 N-linked (GlcNAc...) asparagine glycosylation sites follow: N151, N161, N166, and N176. Residues 189-212 (MIYTVGYSMSLASLTVAVLILAYF) form a helical membrane-spanning segment. Residues 213–219 (RRLHCTR) lie on the Cytoplasmic side of the membrane. Residues 220–239 (NYIHMHMFLSFMLRAASIFV) traverse the membrane as a helical segment. The Extracellular segment spans residues 240 to 282 (KDAVLYSGFTLDEAERLTEEELHIIAQVPPPPAAAAVGYAGCR). The chain crosses the membrane as a helical span at residues 283–306 (VAVTFFLYFLATNYYWILVEGLYL). Residues 307-320 (HSLIFMAFFSEKKY) are Cytoplasmic-facing. A helical membrane pass occupies residues 321–342 (LWGFTIFGWGLPAVFVAVWVGV). At 343–361 (RATLANTGCWDLSSGHKKW) the chain is on the extracellular side. A helical membrane pass occupies residues 362 to 382 (IIQVPILASVVLNFILFINII). The Cytoplasmic segment spans residues 383–409 (RVLATKLRETNAGRCDTRQQYRKLLRS). The chain crosses the membrane as a helical span at residues 410-428 (TLVLVPLFGVHYTVFMALP). Over 429–440 (YTEVSGTLWQIQ) the chain is Extracellular. Residues 441 to 463 (MHYEMLFNSFQGFFVAIIYCFCN) form a helical membrane-spanning segment. At 464 to 591 (GEVQAEIRKS…LLQEEWETVM (128 aa)) the chain is on the cytoplasmic side. The Important for interaction with G proteins motif lies at 474–477 (WSRW). The tract at residues 516–544 (LPLSPRLPPATTNGHSQLPGHAKPGAPAT) is disordered.

It belongs to the G-protein coupled receptor 2 family. As to quaternary structure, homodimer in the absence of bound ligand. Peptide hormone binding leads to dissociation of the homodimer. N-glycosylated.

Its subcellular location is the cell membrane. In terms of biological role, G-protein-coupled receptor for parathyroid hormone (PTH) and for parathyroid hormone-related peptide (PTHLH). Ligand binding causes a conformation change that triggers signaling via guanine nucleotide-binding proteins (G proteins) and modulates the activity of downstream effectors, such as adenylate cyclase (cAMP). PTH1R is coupled to G(s) G alpha proteins and mediates activation of adenylate cyclase activity. PTHLH dissociates from PTH1R more rapidly than PTH; as consequence, the cAMP response induced by PTHLH decays faster than the response induced by PTH. In Rattus norvegicus (Rat), this protein is Parathyroid hormone/parathyroid hormone-related peptide receptor (Pth1r).